Here is a 272-residue protein sequence, read N- to C-terminus: Acetylglutamate kinase (272 aa).

Residues 46–47, Arg68, and Asn166 contribute to the substrate site; that span reads GA.

It belongs to the acetylglutamate kinase family. ArgB subfamily.

It localises to the cytoplasm. The enzyme catalyses N-acetyl-L-glutamate + ATP = N-acetyl-L-glutamyl 5-phosphate + ADP. It participates in amino-acid biosynthesis; L-arginine biosynthesis; N(2)-acetyl-L-ornithine from L-glutamate: step 2/4. Catalyzes the ATP-dependent phosphorylation of N-acetyl-L-glutamate. This Dehalococcoides mccartyi (strain CBDB1) protein is Acetylglutamate kinase.